Consider the following 856-residue polypeptide: Inactive rhomboid protein 2 (856 aa).

The interval 1–115 is disordered; it reads MASADKNGGS…PGFRRQASLS (115 aa). Topologically, residues 1-409 are cytoplasmic; sequence MASADKNGGS…HRPYFTYWLT (409 aa). The residue at position 90 (Ser-90) is a Phosphoserine. Residues 94-106 show a composition bias toward basic and acidic residues; that stretch reads PRSRWQESSEKRP. Phosphoserine occurs at positions 113 and 117. The segment at 165–184 is disordered; sequence PSQEAPSFQGTESPKPCKMP. An involved in interaction with FRMD8 region spans residues 191-271; it reads ARGRAFRHPE…GQRCRVVKRS (81 aa). Phosphoserine occurs at positions 323, 325, and 328. A helical membrane pass occupies residues 410 to 430; sequence FVHVIITLLVICTYGIAPVGF. The Lumenal portion of the chain corresponds to 431–660; sequence AQHVTTQLVL…PDQFYRLWLS (230 aa). The interval 531–553 is disordered; that stretch reads GPPMDKSDLGQKRTSGAVCHQDP. The chain crosses the membrane as a helical span at residues 661–681; it reads LFLHAGVVHCLVSVVFQMTIL. Residues 682-692 are Cytoplasmic-facing; it reads RDLEKLAGWHR. Residues 693–713 traverse the membrane as a helical segment; that stretch reads IAIIFILSGITGNLASAIFLP. Residues 714-715 lie on the Lumenal side of the membrane; the sequence is YR. A helical transmembrane segment spans residues 716–736; it reads AEVGPAGSQFGLLACLFVELF. The Cytoplasmic segment spans residues 737-747; that stretch reads QSWPLLERPWK. A helical membrane pass occupies residues 748 to 768; the sequence is AFLNLSAIVLFLFICGLLPWI. The Lumenal segment spans residues 769–773; it reads DNIAH. A helical membrane pass occupies residues 774–794; it reads IFGFLSGLLLAFAFLPYITFG. Over 795 to 802 the chain is Cytoplasmic; it reads TSDKYRKR. Residues 803 to 823 form a helical membrane-spanning segment; the sequence is ALILVSLLAFAGLFAALVLWL. Residues 824–856 lie on the Lumenal side of the membrane; it reads YIYPINWPWIEHLTCFPFTSRFCEKYELDQVLH.

It belongs to the peptidase S54 family. Interacts with EGF. Interacts (via cytoplasmic N-terminus) with FRMD8/iTAP; this interaction leads to mutual protein stabilization. Interacts with ADAM17/TACE. Found in the epidermis and esophageal epithelium.

Its subcellular location is the endoplasmic reticulum membrane. It is found in the cell membrane. Its function is as follows. Regulates ADAM17 protease, a sheddase of the epidermal growth factor (EGF) receptor ligands and TNF, thereby plays a role in sleep, cell survival, proliferation, migration and inflammation. Does not exhibit any protease activity on its own. This Homo sapiens (Human) protein is Inactive rhomboid protein 2 (RHBDF2).